The sequence spans 132 residues: MTMTDPIADMLSRVRNANNAHHDAVSMPSSKLKANIAEILKSEGYIADYKVEDAKVGKTLTLDLKYGPNRQRSIEGVRRVSKPGLRVYAKSTNLPQVLGGLGVAIISTSHGLLTDRQATEKGVGGEVLAYVW.

Belongs to the universal ribosomal protein uS8 family. Part of the 30S ribosomal subunit. Contacts proteins S5 and S12.

Functionally, one of the primary rRNA binding proteins, it binds directly to 16S rRNA central domain where it helps coordinate assembly of the platform of the 30S subunit. The protein is Small ribosomal subunit protein uS8 of Corynebacterium diphtheriae (strain ATCC 700971 / NCTC 13129 / Biotype gravis).